A 115-amino-acid polypeptide reads, in one-letter code: DNA-directed RNA polymerase subunit Rpo4 (115 aa).

The protein belongs to the eukaryotic RPB4 RNA polymerase subunit family. As to quaternary structure, part of the RNA polymerase complex. Forms a stalk with Rpo7 that extends from the main structure.

It is found in the cytoplasm. It carries out the reaction RNA(n) + a ribonucleoside 5'-triphosphate = RNA(n+1) + diphosphate. Its function is as follows. DNA-dependent RNA polymerase (RNAP) catalyzes the transcription of DNA into RNA using the four ribonucleoside triphosphates as substrates. This subunit is less well bound than the others. This chain is DNA-directed RNA polymerase subunit Rpo4, found in Methanocaldococcus jannaschii (strain ATCC 43067 / DSM 2661 / JAL-1 / JCM 10045 / NBRC 100440) (Methanococcus jannaschii).